Consider the following 395-residue polypeptide: MRKKLTALVLSALPLAAVADVSLYGEIKAGVEGRNYQLQLTEAQAANGGASGQVKVTKVTKAKSRIRTKISDFGSFIGFKGSEDLGEGLKAVWQLEQDVSVAGGGATQWGNRESFIGLAGEFGTLRAGRVANQFDDASQAIDPWDSNNDVASQLGIFKRHDDMPVSVRYDSPEFSGFSGSVQFVPAQNSKSAYKPAYWTTVNTGSATTTTFVPAVVGKPGSDVYYAGLNYKNGGFAGNYAFKYARHANVGRDAFELFLLGSGSDQAKGTDPLKNHQVHRLTGGYEEGGLNLALAAQLDLSENGDKTKNSTTEIAATASYRFGNAVPRISYAHGFDFIERGKKGENTSYDQIIAGVDYDFSKRTSAIVSGAWLKRNTGIGNYTQINAASVGLRHKF.

The N-terminal stretch at 1–19 is a signal peptide; sequence MRKKLTALVLSALPLAAVA.

Belongs to the Gram-negative porin family. As to quaternary structure, homotrimer.

The protein resides in the cell outer membrane. Its function is as follows. Serves as a slightly cation selective porin. Major antigen on the gonococcal cell surface and it may have pathogenic properties in addition to its porin activity. This Neisseria meningitidis serogroup A / serotype 4A (strain DSM 15465 / Z2491) protein is Major outer membrane protein P.IA (porA).